The sequence spans 94 residues: CRISPR-associated endoribonuclease Cas2 (94 aa).

Mg(2+) is bound at residue aspartate 11.

This sequence belongs to the CRISPR-associated endoribonuclease Cas2 protein family. As to quaternary structure, homodimer, forms a heterotetramer with a Cas1 homodimer. It depends on Mg(2+) as a cofactor.

CRISPR (clustered regularly interspaced short palindromic repeat), is an adaptive immune system that provides protection against mobile genetic elements (viruses, transposable elements and conjugative plasmids). CRISPR clusters contain sequences complementary to antecedent mobile elements and target invading nucleic acids. CRISPR clusters are transcribed and processed into CRISPR RNA (crRNA). Functions as a ssRNA-specific endoribonuclease. Involved in the integration of spacer DNA into the CRISPR cassette. In Thermus thermophilus (strain ATCC 27634 / DSM 579 / HB8), this protein is CRISPR-associated endoribonuclease Cas2.